A 169-amino-acid polypeptide reads, in one-letter code: Putative phosphoesterase BLi01284/BL02661 (169 aa).

His-34 serves as the catalytic Proton donor. 2 consecutive short sequence motifs (HXTX) follow at residues 34-37 and 115-118; these read HLTL and HVTV. His-115 serves as the catalytic Proton acceptor.

It belongs to the 2H phosphoesterase superfamily. YjcG family.

This chain is Putative phosphoesterase BLi01284/BL02661, found in Bacillus licheniformis (strain ATCC 14580 / DSM 13 / JCM 2505 / CCUG 7422 / NBRC 12200 / NCIMB 9375 / NCTC 10341 / NRRL NRS-1264 / Gibson 46).